The chain runs to 378 residues: D-alanine--D-alanine ligase (378 aa).

In terms of domain architecture, ATP-grasp spans 149–374 (KVLLRAAGIP…FRTVVTDLIE (226 aa)). An ATP-binding site is contributed by 189 to 247 (EAGLQYPLFVKPSRAGSSFGVTKVEQIGDAAALAAAVFEASRHDWRVLVEQGIDAREIE). Positions 328, 341, and 343 each coordinate Mg(2+).

This sequence belongs to the D-alanine--D-alanine ligase family. It depends on Mg(2+) as a cofactor. Mn(2+) is required as a cofactor.

It localises to the cytoplasm. The enzyme catalyses 2 D-alanine + ATP = D-alanyl-D-alanine + ADP + phosphate + H(+). It participates in cell wall biogenesis; peptidoglycan biosynthesis. Cell wall formation. In Bifidobacterium animalis subsp. lactis (strain AD011), this protein is D-alanine--D-alanine ligase.